The sequence spans 341 residues: Protein MENT (341 aa).

The N-terminal stretch at 1 to 23 (MVPAAGALLWVLLLNLGPRAAGA) is a signal peptide. The interval 115 to 196 (AGKDSTSREL…SPSPTAMPSP (82 aa)) is disordered. Positions 127–155 (ATPNTAGSSSTRFIANSQEPEIRLTSSLP) are enriched in polar residues.

Phosphorylation sites are present in the extracellular medium. As to expression, plasma. Overexpressed in lymphomas.

Its subcellular location is the secreted. Functionally, involved in control of cellular proliferation. Onconcogenic modifier contributing to the tumor suppressor function of DNMT3B. This Homo sapiens (Human) protein is Protein MENT (MENT).